A 341-amino-acid chain; its full sequence is MKAEIEELQRSFGEIRLFPENSDDLWHLHNLITPGSLVYATTLRSVEGSQDKIRPEKQEKRPVRLGIRVEDVEFHEYSIRLRVFGTIESGVDIGSHHTLNLEPGYEISVIKSWSGSDLERIDRAIKGSTSEAIHILTVEEGEAELYRVQSYGPKQVWSLAAGSGKTAEVSSREEFSEAVVSQVSQLTGPLVIAGPGFVKEEIIAKFKRKNPSRSAPLVIGDTRAGGRRAVQEVIGQGILEKLNGDLQLAREVTCLDELMRRIGKDEPVAYGIDAVRDATGCGAVQTLMVVDTLLRDPDAADLIRQAEAMRSEVVIFSSRFEPGERLAGLGGIAALLRYSIA.

This sequence belongs to the eukaryotic release factor 1 family. Pelota subfamily. In terms of assembly, monomer. A divalent metal cation is required as a cofactor.

It localises to the cytoplasm. Functionally, may function in recognizing stalled ribosomes, interact with stem-loop structures in stalled mRNA molecules, and effect endonucleolytic cleavage of the mRNA. May play a role in the release non-functional ribosomes and degradation of damaged mRNAs. Has endoribonuclease activity. This chain is Protein pelota homolog, found in Methanospirillum hungatei JF-1 (strain ATCC 27890 / DSM 864 / NBRC 100397 / JF-1).